The sequence spans 213 residues: Iron sulfur cluster assembly protein 1, mitochondrial (213 aa).

Belongs to the NifU family. As to quaternary structure, component of the core Fe-S cluster (ISC) assembly machinery. [2Fe-2S] cluster serves as cofactor.

It is found in the mitochondrion matrix. Its pathway is cofactor biosynthesis; iron-sulfur cluster biosynthesis. Functionally, scaffold protein for the de novo synthesis of iron-sulfur (Fe-S) clusters within mitochondria, which is required for maturation of both mitochondrial and cytoplasmic [2Fe-2S] and [4Fe-4S] proteins. First, a [2Fe-2S] cluster is transiently assembled on the scaffold protein ISU1. In a second step, the cluster is released from ISU1, transferred to a glutaredoxin, followed by the formation of mitochondrial [2Fe-2S] proteins, the synthesis of [4Fe-4S] clusters and their target-specific insertion into the recipient apoproteins. Cluster assembly on ISU1 depends on the function of the cysteine desulfurase complex NFS1-ISD11, which serves as the sulfur donor for cluster synthesis, the iron-binding protein frataxin as the putative iron donor, and the electron transfer chain comprised of ferredoxin reductase and ferredoxin, which receive their electrons from NADH. This Candida glabrata (strain ATCC 2001 / BCRC 20586 / JCM 3761 / NBRC 0622 / NRRL Y-65 / CBS 138) (Yeast) protein is Iron sulfur cluster assembly protein 1, mitochondrial (ISU1).